The chain runs to 102 residues: Large ribosomal subunit protein bL21 (102 aa).

It belongs to the bacterial ribosomal protein bL21 family. As to quaternary structure, part of the 50S ribosomal subunit. Contacts protein L20.

In terms of biological role, this protein binds to 23S rRNA in the presence of protein L20. This Agathobacter rectalis (strain ATCC 33656 / DSM 3377 / JCM 17463 / KCTC 5835 / VPI 0990) (Eubacterium rectale) protein is Large ribosomal subunit protein bL21.